A 350-amino-acid polypeptide reads, in one-letter code: UDP-N-acetylenolpyruvoylglucosamine reductase (350 aa).

Residues 24-195 (HVDATARWLL…VAVEFNLPLL (172 aa)) form the FAD-binding PCMH-type domain. The active site involves R172. S245 (proton donor) is an active-site residue. E342 is an active-site residue.

Belongs to the MurB family. FAD is required as a cofactor.

The protein resides in the cytoplasm. It catalyses the reaction UDP-N-acetyl-alpha-D-muramate + NADP(+) = UDP-N-acetyl-3-O-(1-carboxyvinyl)-alpha-D-glucosamine + NADPH + H(+). The protein operates within cell wall biogenesis; peptidoglycan biosynthesis. Its function is as follows. Cell wall formation. The polypeptide is UDP-N-acetylenolpyruvoylglucosamine reductase (Xanthomonas campestris pv. campestris (strain 8004)).